Consider the following 227-residue polypeptide: uncharacterized protein (227 aa).

Transmembrane regions (helical) follow at residues 12–32 (IVLF…YLYA) and 80–100 (IILI…KIPL).

It is found in the cell membrane. This is an uncharacterized protein from Methanocaldococcus jannaschii (strain ATCC 43067 / DSM 2661 / JAL-1 / JCM 10045 / NBRC 100440) (Methanococcus jannaschii).